A 501-amino-acid chain; its full sequence is HMG-box protein STE11 (501 aa).

Residues 142–153 (PVNMVGSLSGSP) show a composition bias toward polar residues. Disordered regions lie at residues 142-205 (PVNM…KRPL) and 246-293 (YAEM…SLEQ). Residues 192–204 (SRSGSSSSGIKRP) show a composition bias toward low complexity. The segment at residues 201–265 (IKRPLNSFML…RHAKEYPDYK (65 aa)) is a DNA-binding region (HMG box). Basic and acidic residues predominate over residues 246 to 263 (YAEMAQRERERHAKEYPD).

Post-translationally, phosphorylated by MAPK2.

The protein localises to the nucleus. This chain is HMG-box protein STE11, found in Pneumocystis carinii.